A 355-amino-acid chain; its full sequence is S-adenosylmethionine:tRNA ribosyltransferase-isomerase (355 aa).

This sequence belongs to the QueA family. Monomer.

The protein localises to the cytoplasm. It carries out the reaction 7-aminomethyl-7-carbaguanosine(34) in tRNA + S-adenosyl-L-methionine = epoxyqueuosine(34) in tRNA + adenine + L-methionine + 2 H(+). It functions in the pathway tRNA modification; tRNA-queuosine biosynthesis. Functionally, transfers and isomerizes the ribose moiety from AdoMet to the 7-aminomethyl group of 7-deazaguanine (preQ1-tRNA) to give epoxyqueuosine (oQ-tRNA). In Burkholderia orbicola (strain MC0-3), this protein is S-adenosylmethionine:tRNA ribosyltransferase-isomerase.